The primary structure comprises 210 residues: Outer-membrane lipoprotein carrier protein (210 aa).

The signal sequence occupies residues 1–23; sequence MKKRIQKTILTVLFSSLSSIAFA.

The protein belongs to the LolA family. Monomer.

The protein localises to the periplasm. Participates in the translocation of lipoproteins from the inner membrane to the outer membrane. Only forms a complex with a lipoprotein if the residue after the N-terminal Cys is not an aspartate (The Asp acts as a targeting signal to indicate that the lipoprotein should stay in the inner membrane). The sequence is that of Outer-membrane lipoprotein carrier protein from Haemophilus ducreyi (strain 35000HP / ATCC 700724).